Consider the following 437-residue polypeptide: GTPase Obg (437 aa).

Residues 2–160 (SMFLDTAKIS…RQLELELKIL (159 aa)) form the Obg domain. The region spanning 161 to 338 (ADVGLVGFPS…LLEATAELLA (178 aa)) is the OBG-type G domain. Residues 167 to 174 (GFPSVGKS), 192 to 196 (FTTIV), 214 to 217 (DLPG), 284 to 287 (NKMD), and 319 to 321 (SSL) contribute to the GTP site. Residues Ser-174 and Thr-194 each contribute to the Mg(2+) site. The OCT domain occupies 359 to 437 (GFAETEKDFE…IGKFEFEFVD (79 aa)).

The protein belongs to the TRAFAC class OBG-HflX-like GTPase superfamily. OBG GTPase family. In terms of assembly, monomer. Mg(2+) is required as a cofactor.

It localises to the cytoplasm. An essential GTPase which binds GTP, GDP and possibly (p)ppGpp with moderate affinity, with high nucleotide exchange rates and a fairly low GTP hydrolysis rate. Plays a role in control of the cell cycle, stress response, ribosome biogenesis and in those bacteria that undergo differentiation, in morphogenesis control. The chain is GTPase Obg from Streptococcus pyogenes serotype M1.